The primary structure comprises 853 residues: DNA mismatch repair protein MutS (853 aa).

An ATP-binding site is contributed by 614-621 (GPNMGGKS).

This sequence belongs to the DNA mismatch repair MutS family.

Functionally, this protein is involved in the repair of mismatches in DNA. It is possible that it carries out the mismatch recognition step. This protein has a weak ATPase activity. This is DNA mismatch repair protein MutS from Escherichia coli O157:H7 (strain EC4115 / EHEC).